Reading from the N-terminus, the 177-residue chain is MKVPEDLVLVGYISGAYGLNGWVRVRPYSADADALLNAKTWWLDKPEFRDVAMMQSKIHSGDVVAQLMGVAGRDAAEALKGATVQIPRSHFPALSDNEFYWVDLIGLEVENLQGVRLGQVSDMMDNGAHPILRVAVPQTSEADPKAAQELLIPFVEQFVITIDQTAKKITVDWGLDY.

The 82-residue stretch at 96 to 177 (DNEFYWVDLI…KITVDWGLDY (82 aa)) folds into the PRC barrel domain.

It belongs to the RimM family. Binds ribosomal protein uS19.

The protein localises to the cytoplasm. In terms of biological role, an accessory protein needed during the final step in the assembly of 30S ribosomal subunit, possibly for assembly of the head region. Essential for efficient processing of 16S rRNA. May be needed both before and after RbfA during the maturation of 16S rRNA. It has affinity for free ribosomal 30S subunits but not for 70S ribosomes. The chain is Ribosome maturation factor RimM from Herminiimonas arsenicoxydans.